A 62-amino-acid polypeptide reads, in one-letter code: Pro-MCH variant (62 aa).

An NGE-like region spans residues 23-41 (GSVAFPAENGVQDTESTQE). The tract at residues 28–62 (PAENGVQDTESTQEKRETGDEENSAQFPIGRRDFD) is disordered. Residues 44 to 56 (ETGDEENSAQFPI) are NEI-like. The melanin-concentrating hormone-like stretch occupies residues 60 to 62 (DFD).

This sequence belongs to the melanin-concentrating hormone family.

The chain is Pro-MCH variant (PMCHL1) from Hylobates lar (Lar gibbon).